The following is a 196-amino-acid chain: Xanthine phosphoribosyltransferase (196 aa).

Xanthine-binding residues include leucine 20 and asparagine 27. 128–132 is a 5-phospho-alpha-D-ribose 1-diphosphate binding site; that stretch reads ATGAA. Lysine 156 is a xanthine binding site.

The protein belongs to the purine/pyrimidine phosphoribosyltransferase family. Xpt subfamily. In terms of assembly, homodimer.

The protein localises to the cytoplasm. The catalysed reaction is XMP + diphosphate = xanthine + 5-phospho-alpha-D-ribose 1-diphosphate. It participates in purine metabolism; XMP biosynthesis via salvage pathway; XMP from xanthine: step 1/1. Its function is as follows. Converts the preformed base xanthine, a product of nucleic acid breakdown, to xanthosine 5'-monophosphate (XMP), so it can be reused for RNA or DNA synthesis. The chain is Xanthine phosphoribosyltransferase from Brevibacillus brevis (strain 47 / JCM 6285 / NBRC 100599).